The primary structure comprises 221 residues: GTP cyclohydrolase III (221 aa).

This sequence belongs to the archaeal-type GTP cyclohydrolase family.

The catalysed reaction is GTP + 3 H2O = 2-amino-5-formylamino-6-(5-phospho-D-ribosylamino)pyrimidin-4(3H)-one + 2 phosphate + 2 H(+). Functionally, catalyzes the formation of 2-amino-5-formylamino-6-ribofuranosylamino-4(3H)-pyrimidinone ribonucleotide monophosphate and inorganic phosphate from GTP. Also has an independent pyrophosphate phosphohydrolase activity. This chain is GTP cyclohydrolase III, found in Pyrobaculum arsenaticum (strain DSM 13514 / JCM 11321 / PZ6).